The following is a 267-amino-acid chain: Ras-related protein Rab-36 (267 aa).

Residues Val68, Gly69, Lys70, Thr71, Ser72, Asp83, Tyr86, and Thr89 each contribute to the GTP site. Position 71 (Thr71) interacts with Mg(2+). Residues 76-94 (RFCKNVFDRDYKATIGVDF) carry the Switch 1 motif. Positions 89 and 112 each coordinate Mg(2+). A Switch 2 motif is present at residues 113-132 (TAGQEKFKCIASAYYRGAQV). GTP-binding residues include Gly115, Lys172, Asp174, Ser203, Ala204, and Lys205. The disordered stretch occupies residues 243–267 (GDLIQMEGSPPETQESKRPSSLGCC). S-geranylgeranyl cysteine attachment occurs at residues Cys266 and Cys267.

The protein belongs to the small GTPase superfamily. Rab family. The cofactor is Mg(2+). In terms of tissue distribution, ubiquitously present in all tissues examined.

It localises to the golgi apparatus membrane. It carries out the reaction GTP + H2O = GDP + phosphate + H(+). Its activity is regulated as follows. Regulated by guanine nucleotide exchange factors (GEFs) which promote the exchange of bound GDP for free GTP. Regulated by GTPase activating proteins (GAPs) which increase the GTP hydrolysis activity. Inhibited by GDP dissociation inhibitors (GDIs). Functionally, the small GTPases Rab are key regulators of intracellular membrane trafficking, from the formation of transport vesicles to their fusion with membranes. Rabs cycle between an inactive GDP-bound form and an active GTP-bound form that is able to recruit to membranes different sets of downstream effectors directly responsible for vesicle formation, movement, tethering and fusion. In Homo sapiens (Human), this protein is Ras-related protein Rab-36.